The primary structure comprises 175 residues: Interferon a3 (175 aa).

An N-terminal signal peptide occupies residues 1–23 (MYTMQSWSCIFLIICSMQSVCHC). A disulfide bond links C24 and C120.

It belongs to the alpha/beta interferon family. In terms of tissue distribution, isoform 1 and isoform 2 are expressed in several tissues, including gill, spleen, intestine, kidney and skin.

The protein resides in the secreted. It is found in the cytoplasm. It localises to the cytosol. Its function is as follows. Key player in antiviral response. Induces expression of TLRs, including that of TLR3, TLR9 and TLR8a1, and that of cytosolic pattern recognition receptors, including RIGI, IFIH1/MDA5 and DHX58/LGP2. Also induces MX1 and its own expression. In the presence of intracellular IFNAR2 (iIFNAR2) and IFNAR1B, intracellular isoform 3 may mediate STAT1 and STAT2 phosphorylation and induction of EIF2AK2, MX1 and RSAD2. The polypeptide is Interferon a3 (Oncorhynchus mykiss (Rainbow trout)).